A 332-amino-acid polypeptide reads, in one-letter code: Cyclin-D1-binding protein 1 (332 aa).

At A2 the chain carries N-acetylalanine. Interaction with TCF3 stretches follow at residues A2 to V184 and I150 to D332. Interaction with RPLP0 regions lie at residues A2–E190 and L240–D332. The segment at A2–T208 is required for interaction with CCND1.

It belongs to the CCNDBP1 family. In terms of assembly, interacts with CCND1 and GRAP2. May also interact with COPS5, RPLP0, SIRT6, SYF2 and TCF3. Post-translationally, phosphorylated.

It is found in the cytoplasm. The protein localises to the nucleus. In terms of biological role, may negatively regulate cell cycle progression. May act at least in part via inhibition of the cyclin-D1/CDK4 complex, thereby preventing phosphorylation of RB1 and blocking E2F-dependent transcription. This chain is Cyclin-D1-binding protein 1 (CCNDBP1), found in Macaca fascicularis (Crab-eating macaque).